We begin with the raw amino-acid sequence, 308 residues long: Pantothenate kinase (308 aa).

93-100 (GSVAVGKS) provides a ligand contact to ATP.

This sequence belongs to the prokaryotic pantothenate kinase family.

Its subcellular location is the cytoplasm. The enzyme catalyses (R)-pantothenate + ATP = (R)-4'-phosphopantothenate + ADP + H(+). The protein operates within cofactor biosynthesis; coenzyme A biosynthesis; CoA from (R)-pantothenate: step 1/5. The protein is Pantothenate kinase of Corynebacterium diphtheriae (strain ATCC 700971 / NCTC 13129 / Biotype gravis).